The sequence spans 473 residues: LETM1 domain-containing protein mdm28, mitochondrial (473 aa).

The transit peptide at 1-73 (MLRNRLFKTP…FYNIGSSRLY (73 aa)) directs the protein to the mitochondrion. Topologically, residues 74 to 161 (STETPTPSKV…LTRTLKDIGR (88 aa)) are mitochondrial intermembrane. A helical transmembrane segment spans residues 162–182 (LVPFSVFVVVPFAELLLPIAV). The Mitochondrial matrix segment spans residues 183–473 (KLFPNLLPST…ESNIPKNERK (291 aa)). The region spanning 205-398 (QLRKTRNEVS…LQDTLASIPD (194 aa)) is the Letm1 RBD domain. The interval 430 to 473 (EEEAEHVAEHPDLAKKQTEENKATSKPAVSAKSPESNIPKNERK) is disordered. A compositionally biased stretch (basic and acidic residues) spans 434–452 (EHVAEHPDLAKKQTEENKA). Over residues 462-473 (SPESNIPKNERK) the composition is skewed to polar residues.

It is found in the mitochondrion inner membrane. In terms of biological role, involved in mitochondrial potassium homeostasis through the mitochondrial K(+)/H(+) exchange regulation. This is LETM1 domain-containing protein mdm28, mitochondrial (mdm28) from Schizosaccharomyces pombe (strain 972 / ATCC 24843) (Fission yeast).